Reading from the N-terminus, the 335-residue chain is Ketol-acid reductoisomerase (NADP(+)) 2 (335 aa).

The 180-residue stretch at 1-180 (MKTYYEKDAN…GCTRAGVIET (180 aa)) folds into the KARI N-terminal Rossmann domain. NADP(+) contacts are provided by residues 24–27 (YGSQ), R47, S51, and 81–84 (DEQQ). H106 is an active-site residue. G132 contacts NADP(+). The region spanning 181 to 326 (TFQEETETDL…AELREMMSWI (146 aa)) is the KARI C-terminal knotted domain. Residues D189, E193, E225, and E229 each coordinate Mg(2+). S250 contacts substrate.

It belongs to the ketol-acid reductoisomerase family. Requires Mg(2+) as cofactor.

It carries out the reaction (2R)-2,3-dihydroxy-3-methylbutanoate + NADP(+) = (2S)-2-acetolactate + NADPH + H(+). The enzyme catalyses (2R,3R)-2,3-dihydroxy-3-methylpentanoate + NADP(+) = (S)-2-ethyl-2-hydroxy-3-oxobutanoate + NADPH + H(+). The protein operates within amino-acid biosynthesis; L-isoleucine biosynthesis; L-isoleucine from 2-oxobutanoate: step 2/4. It participates in amino-acid biosynthesis; L-valine biosynthesis; L-valine from pyruvate: step 2/4. Involved in the biosynthesis of branched-chain amino acids (BCAA). Catalyzes an alkyl-migration followed by a ketol-acid reduction of (S)-2-acetolactate (S2AL) to yield (R)-2,3-dihydroxy-isovalerate. In the isomerase reaction, S2AL is rearranged via a Mg-dependent methyl migration to produce 3-hydroxy-3-methyl-2-ketobutyrate (HMKB). In the reductase reaction, this 2-ketoacid undergoes a metal-dependent reduction by NADPH to yield (R)-2,3-dihydroxy-isovalerate. The sequence is that of Ketol-acid reductoisomerase (NADP(+)) 2 from Bacillus cereus (strain ZK / E33L).